We begin with the raw amino-acid sequence, 270 residues long: Diaminopimelate epimerase (270 aa).

Asparagine 15, glutamine 49, and asparagine 66 together coordinate substrate. Cysteine 75 acts as the Proton donor in catalysis. Residues 76 to 77, asparagine 155, asparagine 187, and 204 to 205 contribute to the substrate site; these read GN and ER. Residue cysteine 213 is the Proton acceptor of the active site. 214–215 serves as a coordination point for substrate; the sequence is GS.

The protein belongs to the diaminopimelate epimerase family. In terms of assembly, homodimer.

The protein resides in the cytoplasm. It catalyses the reaction (2S,6S)-2,6-diaminopimelate = meso-2,6-diaminopimelate. Its pathway is amino-acid biosynthesis; L-lysine biosynthesis via DAP pathway; DL-2,6-diaminopimelate from LL-2,6-diaminopimelate: step 1/1. Catalyzes the stereoinversion of LL-2,6-diaminopimelate (L,L-DAP) to meso-diaminopimelate (meso-DAP), a precursor of L-lysine and an essential component of the bacterial peptidoglycan. This chain is Diaminopimelate epimerase, found in Rickettsia conorii (strain ATCC VR-613 / Malish 7).